A 714-amino-acid polypeptide reads, in one-letter code: MASEAPSPPRSPPPPTSPEPELAQLRRKVEKLERELRSCKRQVREIEKLLHHTERLYQNAESNNQELRTQVEELSKILQRGRNEDNKKSDVEVQTENHAPWSISDYFYQTYYNDVSLPNKVTELSDQQDQAIETSILNSKDHLQVENDAYPGTDRTENVKYRQVDHFASNSQEPASALATEDTSLEGSSLAESLRAAAEAAVSQTGFSYDENTGLYFDHSTGFYYDSENQLYYDPSTGIYYYCDVESGRYQFHSRVDLQPYPTSSTKQSKDKKLKKKRKDPDSSATNEEKDLNSEDQKAFSVEHTSCNEEENFANMKKKAKIGIHHKNSPPKVTVPTSGNTIESPLHENISNSTSFKDEKIMETDSEPEEGEITDSQTEDSYDEAITSEGNVTAEDSEDEDEDKIWPPCIRVIVIRSPVLQIGSLFIITAVNPATIGREKDMEHTLRIPEVGVSKFHAEIYFDHDLQSYVLVDQGSQNGTIVNGKQILQPKTKCDPYVLEHGDEVKIGETVLSFHIHPGSDTCDGCEPGQVRAHLRLDKKDESFVGPTLSKEEKELERRKELKKIRVKYGLQNTEYEDEKTLKNPKYKDRAGKRREQVGSEGTFQRDDAPASVHSEITDSNKGRKMLEKMGWKKGEGLGKDGGGMKTPIQLQLRRTHAGLGTGKPSSFEDVHLLQNKNKKNWDKARERFTENFPETKPQKDDPGTMPWVKGTLE.

Over residues 1–18 (MASEAPSPPRSPPPPTSP) the composition is skewed to pro residues. 3 disordered regions span residues 1–22 (MASE…EPEL), 259–307 (QPYP…HTSC), and 322–384 (IGIH…SYDE). At alanine 2 the chain carries N-acetylalanine. Phosphoserine is present on residues serine 7 and serine 11. A coiled-coil region spans residues 18–88 (PEPELAQLRR…QRGRNEDNKK (71 aa)). Basic and acidic residues predominate over residues 279 to 298 (KDPDSSATNEEKDLNSEDQK). Over residues 335–355 (VPTSGNTIESPLHENISNSTS) the composition is skewed to polar residues. Serine 344 carries the post-translational modification Phosphoserine. Residues 364-383 (TDSEPEEGEITDSQTEDSYD) are compositionally biased toward acidic residues. Positions 434–487 (ATIGREKDMEHTLRIPEVGVSKFHAEIYFDHDLQSYVLVDQGSQNGTIVNGKQI) constitute an FHA domain. Positions 586-609 (KYKDRAGKRREQVGSEGTFQRDDA) are enriched in basic and acidic residues. Disordered stretches follow at residues 586–617 (KYKD…HSEI) and 655–714 (RTHA…GTLE). The region spanning 619–665 (DSNKGRKMLEKMGWKKGEGLGKDGGGMKTPIQLQLRRTHAGLGTGKP) is the G-patch domain. N6-acetyllysine is present on lysine 664. Residues 680–690 (KNWDKARERFT) are compositionally biased toward basic and acidic residues.

Interacts with the secreted angiogenic factor TNFSF12. In terms of tissue distribution, widely expressed. Expressed in endothelial cells, vascular smooth muscle cells and osteoblasts. Expressed in umbilical vein endothelial cells and microvascular endothelial cells.

It localises to the cytoplasm. It is found in the secreted. Promotes angiogenesis and the proliferation of endothelial cells. Able to bind to endothelial cells and promote cell proliferation, suggesting that it may act in an autocrine fashion. In Homo sapiens (Human), this protein is Angiogenic factor with G patch and FHA domains 1 (AGGF1).